The sequence spans 556 residues: 2-succinyl-5-enolpyruvyl-6-hydroxy-3-cyclohexene-1-carboxylate synthase (556 aa).

Belongs to the TPP enzyme family. MenD subfamily. Homodimer. Mg(2+) serves as cofactor. Mn(2+) is required as a cofactor. Requires thiamine diphosphate as cofactor.

The enzyme catalyses isochorismate + 2-oxoglutarate + H(+) = 5-enolpyruvoyl-6-hydroxy-2-succinyl-cyclohex-3-ene-1-carboxylate + CO2. It functions in the pathway quinol/quinone metabolism; 1,4-dihydroxy-2-naphthoate biosynthesis; 1,4-dihydroxy-2-naphthoate from chorismate: step 2/7. The protein operates within quinol/quinone metabolism; menaquinone biosynthesis. Catalyzes the thiamine diphosphate-dependent decarboxylation of 2-oxoglutarate and the subsequent addition of the resulting succinic semialdehyde-thiamine pyrophosphate anion to isochorismate to yield 2-succinyl-5-enolpyruvyl-6-hydroxy-3-cyclohexene-1-carboxylate (SEPHCHC). This is 2-succinyl-5-enolpyruvyl-6-hydroxy-3-cyclohexene-1-carboxylate synthase from Escherichia coli O17:K52:H18 (strain UMN026 / ExPEC).